Reading from the N-terminus, the 143-residue chain is Probable glycine cleavage system H protein (143 aa).

Positions 36–118 (VATVGITDFA…YGEGWIFKIK (83 aa)) constitute a Lipoyl-binding domain. Lysine 77 carries the post-translational modification N6-lipoyllysine.

It belongs to the GcvH family. As to quaternary structure, the glycine cleavage system is composed of four proteins: P, T, L and H. (R)-lipoate is required as a cofactor.

Its function is as follows. The glycine cleavage system catalyzes the degradation of glycine. The H protein shuttles the methylamine group of glycine from the P protein to the T protein. The protein is Probable glycine cleavage system H protein of Aeropyrum pernix (strain ATCC 700893 / DSM 11879 / JCM 9820 / NBRC 100138 / K1).